Consider the following 289-residue polypeptide: Probable aquaporin PIP-type 7a (289 aa).

A disordered region spans residues 1–39; the sequence is MEAKEQDVSLGANKFPERQPLGIAAQSQDEPKDYQEPPP. Residues 1 to 57 are Cytoplasmic-facing; it reads MEAKEQDVSLGANKFPERQPLGIAAQSQDEPKDYQEPPPAPLFEPSELTSWSFYRAG. Residues 58–78 form a helical membrane-spanning segment; it reads IAEFIATFLFLYITVLTVMGV. Residues 79–91 lie on the Extracellular side of the membrane; the sequence is VRESSKCKTVGIQ. Residues 92 to 112 form a helical membrane-spanning segment; it reads GIAWAFGGMIFALVYCTAGIS. Topologically, residues 113 to 135 are cytoplasmic; the sequence is GGHINPAVTFGLFLARKLSLTRA. Positions 117–119 match the NPA 1 motif; the sequence is NPA. Residues 136-156 traverse the membrane as a helical segment; sequence IFYMVMQVLGAICGAGVVKGF. Residues 157 to 178 lie on the Extracellular side of the membrane; it reads EGKQRFGDLNGGANFVAPGYTK. A helical membrane pass occupies residues 179-199; sequence GDGLGAEIVGTFILVYTVFSA. At 200–212 the chain is on the cytoplasmic side; sequence TDAKRSARDSHVP. The chain crosses the membrane as a helical span at residues 213–233; the sequence is ILAPLPIGFAVFLVHLATIPI. Over 234–260 the chain is Extracellular; the sequence is TGTGINPARSLGAAIVFNKKIGWNDHW. The short motif at 239-241 is the NPA 2 element; the sequence is NPA. Residues 261–281 traverse the membrane as a helical segment; it reads IFWVGPFIGAALAALYHQVVI. At 282-289 the chain is on the cytoplasmic side; the sequence is RAIPFKSK.

Belongs to the MIP/aquaporin (TC 1.A.8) family. PIP (TC 1.A.8.11) subfamily.

Its subcellular location is the cell membrane. Aquaporins facilitate the transport of water and small neutral solutes across cell membranes. The protein is Probable aquaporin PIP-type 7a (TRG-31) of Pisum sativum (Garden pea).